The following is a 39-amino-acid chain: Photosystem II reaction center protein J (39 aa).

The helical transmembrane segment at Leu-9–Tyr-29 threads the bilayer.

This sequence belongs to the PsbJ family. PSII is composed of 1 copy each of membrane proteins PsbA, PsbB, PsbC, PsbD, PsbE, PsbF, PsbH, PsbI, PsbJ, PsbK, PsbL, PsbM, PsbT, PsbY, PsbZ, Psb30/Ycf12, at least 3 peripheral proteins of the oxygen-evolving complex and a large number of cofactors. It forms dimeric complexes.

It localises to the plastid. The protein localises to the chloroplast thylakoid membrane. In terms of biological role, one of the components of the core complex of photosystem II (PSII). PSII is a light-driven water:plastoquinone oxidoreductase that uses light energy to abstract electrons from H(2)O, generating O(2) and a proton gradient subsequently used for ATP formation. It consists of a core antenna complex that captures photons, and an electron transfer chain that converts photonic excitation into a charge separation. This chain is Photosystem II reaction center protein J, found in Cyanidium caldarium (Red alga).